A 280-amino-acid polypeptide reads, in one-letter code: Inner membrane ABC transporter permease protein YcjP (280 aa).

Over 1 to 10 the chain is Cytoplasmic; the sequence is MATNKRTLSR. The chain crosses the membrane as a helical span at residues 11 to 31; the sequence is IGFYCGLALFLIITLFPFFVM. Residues 32–53 lie on the Periplasmic side of the membrane; the sequence is LMTSFKGAKEAISLHPTLLPQQ. The chain crosses the membrane as a helical span at residues 54 to 74; the sequence is WTLEHYVDIFNPMIFPFVDYF. The 192-residue stretch at 74-265 folds into the ABC transmembrane type-1 domain; that stretch reads FRNSLVVSVV…LPVVIMYALS (192 aa). Over 75 to 77 the chain is Cytoplasmic; sequence RNS. Residues 78 to 98 traverse the membrane as a helical segment; sequence LVVSVVSSVVAVFLGILGAYA. Residues 99 to 117 lie on the Periplasmic side of the membrane; the sequence is LSRLRFKGRMTINASFYTV. A helical membrane pass occupies residues 118–138; sequence YMFSGILLVVPLFKIITALGI. At 139-140 the chain is on the cytoplasmic side; that stretch reads YD. A helical membrane pass occupies residues 141–161; it reads TEMALIITMVTQTLPTAVFML. Topologically, residues 162-189 are periplasmic; the sequence is KSYFDTIPDEIEEAAMMDGLNRLQIIFR. A helical transmembrane segment spans residues 190 to 210; it reads ITVPLAMSGLISVFVYCFMVA. Residues 211-214 are Cytoplasmic-facing; the sequence is WNDY. A helical transmembrane segment spans residues 215 to 235; that stretch reads LFASIFLSSASNFTLPVGLNA. Residues 236-242 are Periplasmic-facing; the sequence is LFSTPDY. A helical transmembrane segment spans residues 243–263; that stretch reads IWGRMMAASLVTALPVVIMYA. Residues 264–280 are Cytoplasmic-facing; it reads LSERFIKSGLTAGGVKG.

It belongs to the binding-protein-dependent transport system permease family. MalFG subfamily.

Its subcellular location is the cell inner membrane. Its function is as follows. Probably part of the binding-protein-dependent transport system YcjNOP. Probably responsible for the translocation of the substrate across the membrane. The chain is Inner membrane ABC transporter permease protein YcjP (ycjP) from Escherichia coli (strain K12).